Here is a 385-residue protein sequence, read N- to C-terminus: Chaperone protein DnaJ (385 aa).

Residues 5–70 enclose the J domain; the sequence is DYYEVLGVAK…QKRAAYDRFG (66 aa). Residues 141-219 form a CR-type zinc finger; the sequence is GKTETIRIPT…CSGAGRVNRE (79 aa). Zn(2+) is bound by residues C154, C157, C171, C174, C193, C196, C207, and C210. CXXCXGXG motif repeat units lie at residues 154–161, 171–178, 193–200, and 207–214; these read CETCSGTG, CSTCGGYG, CPNCHGRG, and CTACSGAG.

The protein belongs to the DnaJ family. As to quaternary structure, homodimer. Requires Zn(2+) as cofactor.

It is found in the cytoplasm. In terms of biological role, participates actively in the response to hyperosmotic and heat shock by preventing the aggregation of stress-denatured proteins and by disaggregating proteins, also in an autonomous, DnaK-independent fashion. Unfolded proteins bind initially to DnaJ; upon interaction with the DnaJ-bound protein, DnaK hydrolyzes its bound ATP, resulting in the formation of a stable complex. GrpE releases ADP from DnaK; ATP binding to DnaK triggers the release of the substrate protein, thus completing the reaction cycle. Several rounds of ATP-dependent interactions between DnaJ, DnaK and GrpE are required for fully efficient folding. Also involved, together with DnaK and GrpE, in the DNA replication of plasmids through activation of initiation proteins. This Methylorubrum extorquens (strain PA1) (Methylobacterium extorquens) protein is Chaperone protein DnaJ.